The sequence spans 389 residues: Chalcone synthase 9 (389 aa).

The active site involves Cys164.

It belongs to the thiolase-like superfamily. Chalcone/stilbene synthases family.

It carries out the reaction (E)-4-coumaroyl-CoA + 3 malonyl-CoA + 3 H(+) = 2',4,4',6'-tetrahydroxychalcone + 3 CO2 + 4 CoA. It participates in secondary metabolite biosynthesis; flavonoid biosynthesis. Functionally, the primary product of this enzyme is 4,2',4',6'-tetrahydroxychalcone (also termed naringenin-chalcone or chalcone) which can under specific conditions spontaneously isomerize into naringenin. The protein is Chalcone synthase 9 (CHS9) of Medicago sativa (Alfalfa).